A 158-amino-acid chain; its full sequence is MTLKTIEGTFIAPKGKYALVVGRFNSFVVESLVSGAIDALVRHGVSESDITIIRAPGAFEIPLVTQKVAQRGEYAAIIALGAVIRGGTPHFEYVAGECTKGLAQVSMEYGVPVAFGVLTVDSIEQAIERSGTKAGNKGAEAALSALEMVSLLAQLEAK.

Residues Phe24, 58-60 (AFE), and 82-84 (AVI) each bind 5-amino-6-(D-ribitylamino)uracil. Position 87–88 (87–88 (GT)) interacts with (2S)-2-hydroxy-3-oxobutyl phosphate. His90 (proton donor) is an active-site residue. 5-amino-6-(D-ribitylamino)uracil is bound at residue Phe115. Arg129 provides a ligand contact to (2S)-2-hydroxy-3-oxobutyl phosphate.

This sequence belongs to the DMRL synthase family. As to quaternary structure, forms an icosahedral capsid composed of 60 subunits, arranged as a dodecamer of pentamers.

The enzyme catalyses (2S)-2-hydroxy-3-oxobutyl phosphate + 5-amino-6-(D-ribitylamino)uracil = 6,7-dimethyl-8-(1-D-ribityl)lumazine + phosphate + 2 H2O + H(+). Its pathway is cofactor biosynthesis; riboflavin biosynthesis; riboflavin from 2-hydroxy-3-oxobutyl phosphate and 5-amino-6-(D-ribitylamino)uracil: step 1/2. Its function is as follows. Catalyzes the formation of 6,7-dimethyl-8-ribityllumazine by condensation of 5-amino-6-(D-ribitylamino)uracil with 3,4-dihydroxy-2-butanone 4-phosphate. This is the penultimate step in the biosynthesis of riboflavin. The protein is 6,7-dimethyl-8-ribityllumazine synthase of Ectopseudomonas mendocina (strain ymp) (Pseudomonas mendocina).